The primary structure comprises 318 residues: Ribose-phosphate pyrophosphokinase (318 aa).

ATP contacts are provided by residues 40 to 42 and 99 to 100; these read DGE and RQ. The Mg(2+) site is built by His-134 and Asp-173. The active site involves Lys-196. D-ribose 5-phosphate-binding positions include Arg-198, Asp-222, and 226–230; that span reads DTAGT.

Belongs to the ribose-phosphate pyrophosphokinase family. Class I subfamily. Homohexamer. Requires Mg(2+) as cofactor.

It is found in the cytoplasm. The catalysed reaction is D-ribose 5-phosphate + ATP = 5-phospho-alpha-D-ribose 1-diphosphate + AMP + H(+). It participates in metabolic intermediate biosynthesis; 5-phospho-alpha-D-ribose 1-diphosphate biosynthesis; 5-phospho-alpha-D-ribose 1-diphosphate from D-ribose 5-phosphate (route I): step 1/1. In terms of biological role, involved in the biosynthesis of the central metabolite phospho-alpha-D-ribosyl-1-pyrophosphate (PRPP) via the transfer of pyrophosphoryl group from ATP to 1-hydroxyl of ribose-5-phosphate (Rib-5-P). The chain is Ribose-phosphate pyrophosphokinase from Burkholderia pseudomallei (strain K96243).